The primary structure comprises 488 residues: Malonate-semialdehyde dehydrogenase (488 aa).

NAD(+)-binding residues include Ala150, Phe152, Lys176, Glu179, Arg180, Ser229, and Thr251. Cys284 acts as the Nucleophile in catalysis. NAD(+) is bound at residue Glu382.

Belongs to the aldehyde dehydrogenase family. IolA subfamily. Homotetramer.

The enzyme catalyses 3-oxopropanoate + NAD(+) + CoA + H2O = hydrogencarbonate + acetyl-CoA + NADH + H(+). It catalyses the reaction 2-methyl-3-oxopropanoate + NAD(+) + CoA + H2O = propanoyl-CoA + hydrogencarbonate + NADH + H(+). It functions in the pathway polyol metabolism; myo-inositol degradation into acetyl-CoA; acetyl-CoA from myo-inositol: step 7/7. In terms of biological role, catalyzes the oxidation of malonate semialdehyde (MSA) and methylmalonate semialdehyde (MMSA) into acetyl-CoA and propanoyl-CoA, respectively. Is involved in a myo-inositol catabolic pathway. Bicarbonate, and not CO2, is the end-product of the enzymatic reaction. The chain is Malonate-semialdehyde dehydrogenase from Listeria monocytogenes serotype 4b (strain CLIP80459).